The chain runs to 582 residues: Glutaredoxin domain-containing cysteine-rich protein CG12206 (582 aa).

Residues 217–227 (CETLDSGTGSD) are compositionally biased toward polar residues. Disordered stretches follow at residues 217 to 244 (CETL…VRSP) and 260 to 300 (EADH…SCDS). Residues 291–300 (SSNSSLSCDS) show a composition bias toward low complexity. The Glutaredoxin domain occupies 423-528 (NVKNYMEKDV…QLLRPYKSIA (106 aa)).

Belongs to the GRXCR1 family.

The chain is Glutaredoxin domain-containing cysteine-rich protein CG12206 from Drosophila melanogaster (Fruit fly).